The primary structure comprises 89 residues: Small ribosomal subunit protein uS15 (89 aa).

Over residues 1–21 the composition is skewed to basic and acidic residues; that stretch reads MALTTEEKKQVLSEYGLHETD. The segment at 1-24 is disordered; the sequence is MALTTEEKKQVLSEYGLHETDTGS.

Belongs to the universal ribosomal protein uS15 family. In terms of assembly, part of the 30S ribosomal subunit. Forms a bridge to the 50S subunit in the 70S ribosome, contacting the 23S rRNA.

Its function is as follows. One of the primary rRNA binding proteins, it binds directly to 16S rRNA where it helps nucleate assembly of the platform of the 30S subunit by binding and bridging several RNA helices of the 16S rRNA. Forms an intersubunit bridge (bridge B4) with the 23S rRNA of the 50S subunit in the ribosome. This Rhodococcus opacus (strain B4) protein is Small ribosomal subunit protein uS15.